The following is an 89-amino-acid chain: MSRSLKKGPYINVKLEKKVLAMNESGKKAVVKTWARASMISPDFVGHTIAVHNGNKFIPVFVTENMVGHKLGEFSPTRTFRGHAGNKKK.

The protein belongs to the universal ribosomal protein uS19 family.

Its function is as follows. Protein S19 forms a complex with S13 that binds strongly to the 16S ribosomal RNA. The protein is Small ribosomal subunit protein uS19 of Parabacteroides distasonis (strain ATCC 8503 / DSM 20701 / CIP 104284 / JCM 5825 / NCTC 11152).